The chain runs to 128 residues: MANLEKLVEDLSALTVLEAAELSKMLEEKWGVSAAAPVAVAAAPAAGGGEAAPAGEEQTEFTVVLTAGGDKKINVIKEVRGVRPDLGLKEAKDLVEGAPQNVKENVSKQEAEEIKKKLEEAGASVQIK.

It belongs to the bacterial ribosomal protein bL12 family. As to quaternary structure, homodimer. Part of the ribosomal stalk of the 50S ribosomal subunit. Forms a multimeric L10(L12)X complex, where L10 forms an elongated spine to which 2 to 4 L12 dimers bind in a sequential fashion. Binds GTP-bound translation factors.

In terms of biological role, forms part of the ribosomal stalk which helps the ribosome interact with GTP-bound translation factors. Is thus essential for accurate translation. In Phenylobacterium zucineum (strain HLK1), this protein is Large ribosomal subunit protein bL12.